The sequence spans 198 residues: Large ribosomal subunit protein bL25 (198 aa).

It belongs to the bacterial ribosomal protein bL25 family. CTC subfamily. Part of the 50S ribosomal subunit; part of the 5S rRNA/L5/L18/L25 subcomplex. Contacts the 5S rRNA. Binds to the 5S rRNA independently of L5 and L18.

In terms of biological role, this is one of the proteins that binds to the 5S RNA in the ribosome where it forms part of the central protuberance. The chain is Large ribosomal subunit protein bL25 from Nitrosomonas europaea (strain ATCC 19718 / CIP 103999 / KCTC 2705 / NBRC 14298).